We begin with the raw amino-acid sequence, 131 residues long: Phosphoribosyl-AMP cyclohydrolase (131 aa).

D90 contributes to the Mg(2+) binding site. Residue C91 participates in Zn(2+) binding. 2 residues coordinate Mg(2+): D92 and D94. Residues C107 and C114 each coordinate Zn(2+).

Belongs to the PRA-CH family. Homodimer. Mg(2+) is required as a cofactor. Zn(2+) serves as cofactor.

Its subcellular location is the cytoplasm. The catalysed reaction is 1-(5-phospho-beta-D-ribosyl)-5'-AMP + H2O = 1-(5-phospho-beta-D-ribosyl)-5-[(5-phospho-beta-D-ribosylamino)methylideneamino]imidazole-4-carboxamide. The protein operates within amino-acid biosynthesis; L-histidine biosynthesis; L-histidine from 5-phospho-alpha-D-ribose 1-diphosphate: step 3/9. Catalyzes the hydrolysis of the adenine ring of phosphoribosyl-AMP. In Hyphomonas neptunium (strain ATCC 15444), this protein is Phosphoribosyl-AMP cyclohydrolase.